The following is a 920-amino-acid chain: Phosphoenolpyruvate carboxylase (920 aa).

Active-site residues include histidine 138 and lysine 583.

This sequence belongs to the PEPCase type 1 family. The cofactor is Mg(2+).

It carries out the reaction oxaloacetate + phosphate = phosphoenolpyruvate + hydrogencarbonate. Forms oxaloacetate, a four-carbon dicarboxylic acid source for the tricarboxylic acid cycle. This Streptococcus pyogenes serotype M1 protein is Phosphoenolpyruvate carboxylase.